Here is a 217-residue protein sequence, read N- to C-terminus: Zinc finger CCHC-type and RNA-binding motif-containing protein 1 (217 aa).

One can recognise an RRM domain in the interval 10 to 88; sequence STVYVSNLPF…RVIKASIAID (79 aa). Residues 105-122 form a CCHC-type zinc finger; it reads SKCYECGESGHLSYACPK. The tract at residues 120-217 is disordered; it reads CPKNMLGERE…YFSDEEELSD (98 aa). The segment covering 145-163 has biased composition (acidic residues); that stretch reads PEEEIEEVEESEDEGEDPA. Ser-155, Ser-210, and Ser-216 each carry phosphoserine.

Component of the U11/U12 snRNPs that are part of the U12-type spliceosome.

It is found in the nucleus. Its subcellular location is the nucleoplasm. The polypeptide is Zinc finger CCHC-type and RNA-binding motif-containing protein 1 (ZCRB1) (Homo sapiens (Human)).